The following is a 413-amino-acid chain: MKQYKILFFIADGLGDRPVRKLQGKTPLEYVDKPNIRELLKNSIIGLMDPISPGVVAGSDTSHLSMFGLDPHKYYRGRGAFEAIGAGARLKASDVAFRGNFATVNNEFIVVDRRAGRKIEEADDLVKELNEKIGEIDGVKVRFYHGTEHRVAVVLSGKGLTDKVSDTDPHEVNKKVLESKPLDNSPESQFTANIINKLTRKIYEILNSSEINKIRVSKGELPANIILLRGAAEFVELPQFESYTKLKAAAVSATALIKGICEQIGMRVVTPPGATGGLDTNYLGKADAAVELLKEYDFVFLHLKATDAASHDGNVDGKVYAINKMDEMIGRILDKLGSELVIAISGDHTTPVEVKEHTGDPVPFLLYVPYDIINDVVNDFNEREARRGSLRIRGLDVINLLLNYSNRAEKYGA.

It belongs to the BPG-independent phosphoglycerate mutase family. A-PGAM subfamily.

The enzyme catalyses (2R)-2-phosphoglycerate = (2R)-3-phosphoglycerate. The protein operates within carbohydrate degradation; glycolysis; pyruvate from D-glyceraldehyde 3-phosphate: step 3/5. In terms of biological role, catalyzes the interconversion of 2-phosphoglycerate and 3-phosphoglycerate. This is 2,3-bisphosphoglycerate-independent phosphoglycerate mutase from Sulfurisphaera tokodaii (strain DSM 16993 / JCM 10545 / NBRC 100140 / 7) (Sulfolobus tokodaii).